Consider the following 155-residue polypeptide: Ribosomal RNA large subunit methyltransferase H (155 aa).

S-adenosyl-L-methionine contacts are provided by residues leucine 72, glycine 103, and 122–127 (LSDLTL).

Belongs to the RNA methyltransferase RlmH family. In terms of assembly, homodimer.

Its subcellular location is the cytoplasm. The enzyme catalyses pseudouridine(1915) in 23S rRNA + S-adenosyl-L-methionine = N(3)-methylpseudouridine(1915) in 23S rRNA + S-adenosyl-L-homocysteine + H(+). In terms of biological role, specifically methylates the pseudouridine at position 1915 (m3Psi1915) in 23S rRNA. This Albidiferax ferrireducens (strain ATCC BAA-621 / DSM 15236 / T118) (Rhodoferax ferrireducens) protein is Ribosomal RNA large subunit methyltransferase H.